Consider the following 536-residue polypeptide: ATPase expression protein 3 (536 aa).

PPR repeat units lie at residues 212 to 246 (TTTM…KKTP) and 386 to 421 (TTGS…GVTP).

The protein localises to the mitochondrion inner membrane. Its function is as follows. Required for respiration. In Eremothecium gossypii (strain ATCC 10895 / CBS 109.51 / FGSC 9923 / NRRL Y-1056) (Yeast), this protein is ATPase expression protein 3 (AEP3).